Consider the following 457-residue polypeptide: tRNA(Ile)-lysidine synthase (457 aa).

27 to 32 (SGGLDS) is an ATP binding site.

The protein belongs to the tRNA(Ile)-lysidine synthase family.

The protein resides in the cytoplasm. The catalysed reaction is cytidine(34) in tRNA(Ile2) + L-lysine + ATP = lysidine(34) in tRNA(Ile2) + AMP + diphosphate + H(+). Functionally, ligates lysine onto the cytidine present at position 34 of the AUA codon-specific tRNA(Ile) that contains the anticodon CAU, in an ATP-dependent manner. Cytidine is converted to lysidine, thus changing the amino acid specificity of the tRNA from methionine to isoleucine. This chain is tRNA(Ile)-lysidine synthase, found in Hamiltonella defensa subsp. Acyrthosiphon pisum (strain 5AT).